The sequence spans 121 residues: Chorion protein S15 (121 aa).

An N-terminal signal peptide occupies residues Met1 to Ala18.

The protein belongs to the chorion protein S15/S18 family.

The protein resides in the secreted. Its function is as follows. Chorion membrane (egg shell) protein; plays a role in protecting the egg from the environment. The chain is Chorion protein S15 (Cp15) from Drosophila subobscura (Fruit fly).